The following is a 197-amino-acid chain: UPF0301 protein A2cp1_4106 (197 aa).

Belongs to the UPF0301 (AlgH) family.

The protein is UPF0301 protein A2cp1_4106 of Anaeromyxobacter dehalogenans (strain 2CP-1 / ATCC BAA-258).